The chain runs to 555 residues: Tau-cadinol synthase (555 aa).

(2E,6E)-farnesyl diphosphate-binding residues include arginine 270, aspartate 307, aspartate 311, arginine 448, and aspartate 451. Mg(2+)-binding residues include aspartate 307 and aspartate 311. Positions 307-311 (DDTYD) match the DDXXD motif motif. Mg(2+) is bound by residues aspartate 451, serine 455, and glutamate 459.

This sequence belongs to the terpene synthase family. It depends on Mg(2+) as a cofactor.

It catalyses the reaction (2E,6E)-farnesyl diphosphate + H2O = tau-cadinol + diphosphate. It carries out the reaction (2E,6E)-farnesyl diphosphate = (+)-gamma-cadinene + diphosphate. It functions in the pathway secondary metabolite biosynthesis; terpenoid biosynthesis. Functionally, sesquiterpene synthase that catalyzes the formation of sesquiterpenes and sesquiterpenoid alcohols. Converts farnesyl diphosphate (FPP) to tau-cadinol. Converts FPP to gamma-cadinene. Tau-cadinol is the major product. The chain is Tau-cadinol synthase from Lavandula angustifolia (Lavender).